The primary structure comprises 461 residues: Glycolipid 2-alpha-mannosyltransferase 2 (461 aa).

Over 1–12 (MKPSIFYSSRQP) the chain is Cytoplasmic. Residues 13–35 (YLKYLAIILTTITIYVLTHSSYS) form a helical; Signal-anchor for type II membrane protein membrane-spanning segment. Over residues 35–52 (SADPNINDVTTKPISETV) the composition is skewed to polar residues. Residues 35-138 (SADPNINDVT…SSSKDPVKPE (104 aa)) form a disordered region. Over 36-461 (ADPNINDVTT…QKPKEWEKYQ (426 aa)) the chain is Lumenal. Composition is skewed to low complexity over residues 61-70 (SSPEQQQQQP) and 106-116 (PKSSSSSPQQQ). Basic and acidic residues predominate over residues 117–126 (EKQDTKKESE). E349 (nucleophile) is an active-site residue.

The protein belongs to the glycosyltransferase 15 family.

The protein localises to the golgi apparatus membrane. Its function is as follows. Involved in O-glycosylation of cell wall and secreted proteins. Transfers an alpha-D-mannosyl residue from GDP-mannose into lipid-linked oligosaccharide, forming an alpha-(1-&gt;2)-D-mannosyl-D-mannose linkage. Mainly responsible for the addition of the third mannose residue in an O-linked mannose pentamer. Can also substitute for MNT1 by adding the second mannose residue. Important for adherence to host surfaces and for virulence. This Candida albicans (strain SC5314 / ATCC MYA-2876) (Yeast) protein is Glycolipid 2-alpha-mannosyltransferase 2 (MNT2).